The following is a 503-amino-acid chain: Aspartyl/glutamyl-tRNA(Asn/Gln) amidotransferase subunit B (503 aa).

The protein belongs to the GatB/GatE family. GatB subfamily. Heterotrimer of A, B and C subunits.

The catalysed reaction is L-glutamyl-tRNA(Gln) + L-glutamine + ATP + H2O = L-glutaminyl-tRNA(Gln) + L-glutamate + ADP + phosphate + H(+). It catalyses the reaction L-aspartyl-tRNA(Asn) + L-glutamine + ATP + H2O = L-asparaginyl-tRNA(Asn) + L-glutamate + ADP + phosphate + 2 H(+). Functionally, allows the formation of correctly charged Asn-tRNA(Asn) or Gln-tRNA(Gln) through the transamidation of misacylated Asp-tRNA(Asn) or Glu-tRNA(Gln) in organisms which lack either or both of asparaginyl-tRNA or glutaminyl-tRNA synthetases. The reaction takes place in the presence of glutamine and ATP through an activated phospho-Asp-tRNA(Asn) or phospho-Glu-tRNA(Gln). The sequence is that of Aspartyl/glutamyl-tRNA(Asn/Gln) amidotransferase subunit B from Cereibacter sphaeroides (strain ATCC 17029 / ATH 2.4.9) (Rhodobacter sphaeroides).